Reading from the N-terminus, the 425-residue chain is Kynureninase (425 aa).

Pyridoxal 5'-phosphate is bound by residues Leu105, Thr106, Phe133–Asp136, Asp218, His221, and Tyr243. Lys244 bears the N6-(pyridoxal phosphate)lysine mark. The pyridoxal 5'-phosphate site is built by Trp274 and Asn302.

Belongs to the kynureninase family. As to quaternary structure, homodimer. It depends on pyridoxal 5'-phosphate as a cofactor.

The catalysed reaction is L-kynurenine + H2O = anthranilate + L-alanine + H(+). The enzyme catalyses 3-hydroxy-L-kynurenine + H2O = 3-hydroxyanthranilate + L-alanine + H(+). It participates in amino-acid degradation; L-kynurenine degradation; L-alanine and anthranilate from L-kynurenine: step 1/1. The protein operates within cofactor biosynthesis; NAD(+) biosynthesis; quinolinate from L-kynurenine: step 2/3. Functionally, catalyzes the cleavage of L-kynurenine (L-Kyn) and L-3-hydroxykynurenine (L-3OHKyn) into anthranilic acid (AA) and 3-hydroxyanthranilic acid (3-OHAA), respectively. The polypeptide is Kynureninase (Flavobacterium psychrophilum (strain ATCC 49511 / DSM 21280 / CIP 103535 / JIP02/86)).